The sequence spans 119 residues: Large ribosomal subunit protein bL17 (119 aa).

Belongs to the bacterial ribosomal protein bL17 family. As to quaternary structure, part of the 50S ribosomal subunit. Contacts protein L32.

The polypeptide is Large ribosomal subunit protein bL17 (Malacoplasma penetrans (strain HF-2) (Mycoplasma penetrans)).